The primary structure comprises 352 residues: Inner membrane protein YeeA (352 aa).

Residues 1–25 lie on the Cytoplasmic side of the membrane; sequence MRADKSLSPFEIRVYRHYRIVHGTR. The next 2 membrane-spanning stretches (helical) occupy residues 26–46 and 47–67; these read VALA…PEST and WPLV…NVVP. Arg68 is a topological domain (cytoplasmic). The chain crosses the membrane as a helical span at residues 69–89; the sequence is AFERIGGTVLGSILGLIALQL. Glu90 is a topological domain (periplasmic). A helical membrane pass occupies residues 91–111; that stretch reads LISLPLMLVWCAAAMFLCGWL. Topologically, residues 112–117 are cytoplasmic; it reads ALGKKP. Residues 118–138 form a helical membrane-spanning segment; the sequence is YQGLLIGVTLAIVVGSPTGEI. The Periplasmic segment spans residues 139 to 147; it reads DTALWRSGD. Residues 148-168 form a helical membrane-spanning segment; sequence VILGSLLAMLFTGIWPQRAFI. The Cytoplasmic portion of the chain corresponds to 169–352; that stretch reads HWRIQLAKSL…SNLICRALRK (184 aa).

The protein localises to the cell inner membrane. In Escherichia coli (strain K12), this protein is Inner membrane protein YeeA (yeeA).